A 211-amino-acid chain; its full sequence is Redox-sensing transcriptional repressor Rex (211 aa).

The H-T-H motif DNA-binding region spans 17 to 56 (KYHRYLEELMKNEVDRISSKELGEKIGFTASQIRQDLNCF). An NAD(+)-binding site is contributed by 91-96 (GAGNIG).

It belongs to the transcriptional regulatory Rex family. As to quaternary structure, homodimer.

The protein resides in the cytoplasm. Its function is as follows. Modulates transcription in response to changes in cellular NADH/NAD(+) redox state. This is Redox-sensing transcriptional repressor Rex from Clostridium beijerinckii (strain ATCC 51743 / NCIMB 8052) (Clostridium acetobutylicum).